Reading from the N-terminus, the 580-residue chain is Acyl-coenzyme A synthetase ACSM4, mitochondrial (580 aa).

A mitochondrion-targeting transit peptide spans 1–22; it reads MKIFFRYQTFRFIWLTKPPGRR. Residues 229-237, 368-373, Asp-455, Arg-470, and Lys-566 each bind ATP; these read TSGTTGFPK and EGYGQT.

This sequence belongs to the ATP-dependent AMP-binding enzyme family. Requires Mg(2+) as cofactor. It depends on Mn(2+) as a cofactor.

Its subcellular location is the mitochondrion. It carries out the reaction a medium-chain fatty acid + ATP + CoA = a medium-chain fatty acyl-CoA + AMP + diphosphate. It catalyses the reaction hexanoate + ATP + CoA = hexanoyl-CoA + AMP + diphosphate. The catalysed reaction is octanoate + ATP + CoA = octanoyl-CoA + AMP + diphosphate. The enzyme catalyses decanoate + ATP + CoA = decanoyl-CoA + AMP + diphosphate. It carries out the reaction dodecanoate + ATP + CoA = dodecanoyl-CoA + AMP + diphosphate. Catalyzes the activation of fatty acids by CoA to produce an acyl-CoA, the first step in fatty acid metabolism. Capable of activating medium-chain fatty acids with a preference for C6-12 fatty acids. The sequence is that of Acyl-coenzyme A synthetase ACSM4, mitochondrial (ACSM4) from Homo sapiens (Human).